The chain runs to 400 residues: Enoyl-[acyl-carrier-protein] reductase [NADH] (400 aa).

NAD(+)-binding positions include 48-53 (GASTGY), 74-75 (FE), 111-112 (DA), and 139-140 (LA). Tyrosine 225 is a binding site for substrate. The active-site Proton donor is tyrosine 235. Residues lysine 244 and 273 to 275 (VVT) each bind NAD(+).

It belongs to the TER reductase family. As to quaternary structure, monomer.

The catalysed reaction is a 2,3-saturated acyl-[ACP] + NAD(+) = a (2E)-enoyl-[ACP] + NADH + H(+). Its pathway is lipid metabolism; fatty acid biosynthesis. Involved in the final reduction of the elongation cycle of fatty acid synthesis (FAS II). Catalyzes the reduction of a carbon-carbon double bond in an enoyl moiety that is covalently linked to an acyl carrier protein (ACP). This Burkholderia cenocepacia (strain ATCC BAA-245 / DSM 16553 / LMG 16656 / NCTC 13227 / J2315 / CF5610) (Burkholderia cepacia (strain J2315)) protein is Enoyl-[acyl-carrier-protein] reductase [NADH].